The chain runs to 144 residues: Large ribosomal subunit protein uL15 (144 aa).

The tract at residues 1 to 49 (MRLNTLSPAAGAKSAAKRVGRGIGSGLGKTAGRGHKGQKSRSGGGVRVG) is disordered. Residues 21–31 (RGIGSGLGKTA) show a composition bias toward gly residues.

The protein belongs to the universal ribosomal protein uL15 family. In terms of assembly, part of the 50S ribosomal subunit.

Binds to the 23S rRNA. This is Large ribosomal subunit protein uL15 from Shewanella piezotolerans (strain WP3 / JCM 13877).